The chain runs to 522 residues: Ribonuclease Y (522 aa).

Residues 7–27 (STILYCLFFFFLGIAAVLAFI) traverse the membrane as a helical segment. The region spanning 212 to 272 (TTSTVGVPTD…VRREVARMSL (61 aa)) is the KH domain. An HD domain is found at 338-431 (VLRHSVEVAF…VATADACSAS (94 aa)).

This sequence belongs to the RNase Y family.

It is found in the cell membrane. Endoribonuclease that initiates mRNA decay. In Rhodopirellula baltica (strain DSM 10527 / NCIMB 13988 / SH1), this protein is Ribonuclease Y.